Reading from the N-terminus, the 297-residue chain is N-acetylmuramic acid 6-phosphate etherase (297 aa).

The region spanning 56–219 (AIEAFNKGGR…STISMIGIGK (164 aa)) is the SIS domain. The active-site Proton donor is glutamate 84. Glutamate 115 is an active-site residue.

This sequence belongs to the GCKR-like family. MurNAc-6-P etherase subfamily. Homodimer.

The enzyme catalyses N-acetyl-D-muramate 6-phosphate + H2O = N-acetyl-D-glucosamine 6-phosphate + (R)-lactate. Its pathway is amino-sugar metabolism; N-acetylmuramate degradation. Functionally, specifically catalyzes the cleavage of the D-lactyl ether substituent of MurNAc 6-phosphate, producing GlcNAc 6-phosphate and D-lactate. The chain is N-acetylmuramic acid 6-phosphate etherase from Lactococcus lactis subsp. cremoris (strain MG1363).